The sequence spans 1017 residues: Adhesion G-protein coupled receptor G2 (1017 aa).

A signal peptide spans 1–37 (MVFSVRQCGHVGRTEEVLLTFKIFLVIICLHVVLVTS). Topologically, residues 38-627 (LEEDTDNSSL…TSVLPAQMMA (590 aa)) are extracellular. N-linked (GlcNAc...) asparagine glycosylation is found at Asn-44, Asn-85, Asn-99, Asn-111, Asn-117, Asn-144, Asn-162, Asn-186, and Asn-194. The interval 301-366 (PLSPQPSAPI…NTTSAPPVQT (66 aa)) is disordered. Low complexity predominate over residues 308-320 (APIASSPAIDMPP). 2 stretches are compositionally biased toward polar residues: residues 321-335 (QSET…THVS) and 344-366 (SFSS…PVQT). Residues Asn-357, Asn-370, Asn-435, Asn-438, Asn-456, Asn-461, Asn-528, Asn-542, Asn-547, Asn-551, and Asn-597 are each glycosylated (N-linked (GlcNAc...) asparagine). The GAIN-B domain maps to 462-619 (TTTFVAQDPA…GVLLDLSRTS (158 aa)). 2 disulfide bridges follow: Cys-570/Cys-601 and Cys-589/Cys-603. The tract at residues 570–619 (CVFWDLGRNGGRGGWSDNGCSVKDRRLNETICTCSHLTSFGVLLDLSRTS) is GPS. Residues 608 to 619 (SFGVLLDLSRTS) form a stachel region. A helical membrane pass occupies residues 628-648 (LTFITYIGCGLSSIFLSVTLV). Over 649–667 (TYIAFEKIRRDYPSKILIQ) the chain is Cytoplasmic. Residues 668–688 (LCAALLLLNLVFLLDSWIALY) form a helical membrane-spanning segment. Over 689 to 693 (KMQGL) the chain is Extracellular. A helical transmembrane segment spans residues 694–714 (CISVAVFLHYFLLVSFTWMGL). A disulfide bridge connects residues Cys-694 and Cys-778. Topologically, residues 715 to 737 (EAFHMYLALVKVFNTYIRKYILK) are cytoplasmic. The chain crosses the membrane as a helical span at residues 738–758 (FCIVGWGVPAVVVTIILTISP). The Extracellular segment spans residues 759–789 (DNYGLGSYGKFPNGSPDDFCWINNNAVFYIT). The helical transmembrane segment at 790–810 (VVGYFCVIFLLNVSMFIVVLV) threads the bilayer. Over 811–834 (QLCRIKKKKQLGAQRKTSIQDLRS) the chain is Cytoplasmic. The chain crosses the membrane as a helical span at residues 835 to 855 (IAGLTFLLGITWGFAFFAWGP). At 856-857 (VN) the chain is on the extracellular side. Residue Asn-857 is glycosylated (N-linked (GlcNAc...) asparagine). The chain crosses the membrane as a helical span at residues 858–878 (VTFMYLFAIFNTLQGFFIFIF). Position 868 (Asn-868) interacts with 3beta-hydroxyandrost-5-en-17-one. The Cytoplasmic portion of the chain corresponds to 879-1017 (YCVAKENVRK…RGSLHFIEQM (139 aa)). Residues 918-939 (QTVNQGVSSSSNSLQSSSNSTN) form a disordered region. At Ser-1010 the chain carries Phosphoserine.

It belongs to the G-protein coupled receptor 2 family. Adhesion G-protein coupled receptor (ADGR) subfamily. In terms of assembly, heterodimer of 2 chains generated by proteolytic processing; the large extracellular N-terminal fragment and the membrane-bound C-terminal fragment predominantly remain associated and non-covalently linked. Interacts with CFTR. Post-translationally, proteolytically cleaved into 2 subunits, an extracellular subunit and a seven-transmembrane subunit. Highly glycosylated. In terms of tissue distribution, epididymis-specific expression (at protein level). Both subunits are associated with apical membranes of efferent ductule and proximal epididymal duct epithelia. Mainly expressed in the nonciliated principal cells of the proximal excurrent ducts. Specifically over-expressed in Ewing sarcomas but also up-regulated in a number of carcinomas derived from prostate, kidney or lung.

The protein resides in the apical cell membrane. Forms a heterodimer of 2 chains generated by proteolytic processing that remain associated through non-covalent interactions mediated by the GAIN-B domain. In the inactivated receptor, the Stachel sequence (also named stalk) is embedded in the GAIN-B domain, where it adopts a beta-strand conformation. On activation, the Stachel moves into the 7 transmembrane region and adopts a twisted hook-shaped configuration that forms contacts within the receptor, leading to coupling of a G-alpha protein, which activates signaling. The cleaved GAIN-B and N-terminal domains can then dissociate from the rest of the receptor. Deoxycorticosterone (DOC) acts as an antagonist of ADGRG2. Adhesion G-protein coupled receptor (aGPCR) for steroid hormones, such as dehydroepiandrosterone (DHEA; also named 3beta-hydroxyandrost-5-en-17-one) and androstenedione. Involved in a signal transduction pathway controlling epididymal function and male fertility. Ligand binding causes a conformation change that triggers signaling via guanine nucleotide-binding proteins (G proteins) and modulates the activity of downstream effectors, such as adenylate cyclase. ADGRG2 is coupled to G(s) G proteins and mediates activation of adenylate cyclase activity. Also able to couple with G(q) G proteins in vitro. Together with CFTR, required to promote fluid reabsorption within efferent ductule. The polypeptide is Adhesion G-protein coupled receptor G2 (Homo sapiens (Human)).